Reading from the N-terminus, the 61-residue chain is Large ribosomal subunit protein uL30 (61 aa).

Belongs to the universal ribosomal protein uL30 family. In terms of assembly, part of the 50S ribosomal subunit.

The protein is Large ribosomal subunit protein uL30 of Neisseria meningitidis serogroup C (strain 053442).